Consider the following 261-residue polypeptide: Transcription factor BEE 3 (261 aa).

Residues 72–82 (NIQNNEESSSQ) are compositionally biased toward low complexity. 2 disordered regions span residues 72-158 (NIQN…TDSH) and 242-261 (VEMGQGRDGSSVFHSSSWTL). Residues 95–123 (VSTSENSVSDQTLSTSSAQVSINGNISTK) show a composition bias toward polar residues. The segment covering 135 to 146 (NREEEKEREVVH) has biased composition (basic and acidic residues). One can recognise a bHLH domain in the interval 153-203 (QATDSHSIAERVRRGKINERLKCLQDIVPGCYKTMGMATMLDEIINYVQSL).

In terms of assembly, homodimer. As to expression, expressed in stems.

The protein localises to the nucleus. Positive regulator of brassinosteroid signaling. The chain is Transcription factor BEE 3 (BEE3) from Arabidopsis thaliana (Mouse-ear cress).